Reading from the N-terminus, the 212-residue chain is MKILGLTGSIGMGKSTAAAMLRRLGVPVHDADATVHALFARGGKAVAAVDAAFPGVVRDGAVDRTALGAQVFGDGAALKRLEAIVHPLVRAAERDFLARHRRARTRLVVLDIPLLFETHGESRCDLVAVVSAPAFLQAARVLARPGMTRQRLDAVLAKQMPDGQKRRRADVVIPTGLGKGPALKRLKAVVAMMRGSRPAAPVGGDASKPPFY.

The 202-residue stretch at 3 to 204 folds into the DPCK domain; the sequence is ILGLTGSIGM…GSRPAAPVGG (202 aa). Residue 11-16 coordinates ATP; that stretch reads GMGKST.

It belongs to the CoaE family.

It localises to the cytoplasm. The enzyme catalyses 3'-dephospho-CoA + ATP = ADP + CoA + H(+). The protein operates within cofactor biosynthesis; coenzyme A biosynthesis; CoA from (R)-pantothenate: step 5/5. Catalyzes the phosphorylation of the 3'-hydroxyl group of dephosphocoenzyme A to form coenzyme A. In Paramagnetospirillum magneticum (strain ATCC 700264 / AMB-1) (Magnetospirillum magneticum), this protein is Dephospho-CoA kinase.